The sequence spans 523 residues: 2-isopropylmalate synthase (523 aa).

The region spanning 5-267 (VIIFDTTLRD…HTRINHQEIW (263 aa)) is the Pyruvate carboxyltransferase domain. Residues Asp14, His202, His204, and Asn238 each coordinate Mn(2+). Positions 392 to 523 (RLEYFSVQSG…QNKEHNQETV (132 aa)) are regulatory domain.

The protein belongs to the alpha-IPM synthase/homocitrate synthase family. LeuA type 1 subfamily. As to quaternary structure, homodimer. It depends on Mn(2+) as a cofactor.

The protein resides in the cytoplasm. It catalyses the reaction 3-methyl-2-oxobutanoate + acetyl-CoA + H2O = (2S)-2-isopropylmalate + CoA + H(+). It participates in amino-acid biosynthesis; L-leucine biosynthesis; L-leucine from 3-methyl-2-oxobutanoate: step 1/4. In terms of biological role, catalyzes the condensation of the acetyl group of acetyl-CoA with 3-methyl-2-oxobutanoate (2-ketoisovalerate) to form 3-carboxy-3-hydroxy-4-methylpentanoate (2-isopropylmalate). This is 2-isopropylmalate synthase from Cronobacter sakazakii (strain ATCC BAA-894) (Enterobacter sakazakii).